A 206-amino-acid chain; its full sequence is Methylthioribulose-1-phosphate dehydratase (206 aa).

Residues His-96 and His-98 each contribute to the Zn(2+) site.

It belongs to the aldolase class II family. MtnB subfamily. It depends on Zn(2+) as a cofactor.

The enzyme catalyses 5-(methylsulfanyl)-D-ribulose 1-phosphate = 5-methylsulfanyl-2,3-dioxopentyl phosphate + H2O. It functions in the pathway amino-acid biosynthesis; L-methionine biosynthesis via salvage pathway; L-methionine from S-methyl-5-thio-alpha-D-ribose 1-phosphate: step 2/6. Functionally, catalyzes the dehydration of methylthioribulose-1-phosphate (MTRu-1-P) into 2,3-diketo-5-methylthiopentyl-1-phosphate (DK-MTP-1-P). This is Methylthioribulose-1-phosphate dehydratase from Azotobacter vinelandii (strain DJ / ATCC BAA-1303).